Here is a 272-residue protein sequence, read N- to C-terminus: Putative phosphoenolpyruvate synthase regulatory protein (272 aa).

152–159 lines the ADP pocket; the sequence is GVSRCGKT.

This sequence belongs to the pyruvate, phosphate/water dikinase regulatory protein family. PSRP subfamily.

It carries out the reaction [pyruvate, water dikinase] + ADP = [pyruvate, water dikinase]-phosphate + AMP + H(+). It catalyses the reaction [pyruvate, water dikinase]-phosphate + phosphate + H(+) = [pyruvate, water dikinase] + diphosphate. Functionally, bifunctional serine/threonine kinase and phosphorylase involved in the regulation of the phosphoenolpyruvate synthase (PEPS) by catalyzing its phosphorylation/dephosphorylation. The sequence is that of Putative phosphoenolpyruvate synthase regulatory protein from Stutzerimonas stutzeri (strain A1501) (Pseudomonas stutzeri).